We begin with the raw amino-acid sequence, 462 residues long: Sodium-coupled neutral amino acid transporter 7 (462 aa).

At Ser-28 the chain carries Phosphoserine. 11 helical membrane passes run 56 to 76, 82 to 102, 130 to 150, 178 to 198, 205 to 225, 239 to 259, 282 to 302, 319 to 339, 371 to 391, 395 to 415, and 428 to 448; these read AIFI…PAAF, VAAG…GLVI, LCEV…LIII, FTIS…REIG, FLSV…YIWP, ASWM…QCHV, AAMV…FLTF, MAVA…YPIL, VLQT…IPDI, ISVI…LCLI, and ASWW…AFIF.

It belongs to the amino acid/polyamine transporter 2 family. In terms of assembly, interacts with the mTORC1 complex; this interaction mediates the recruitment of mTORC1 to the lysosome and its subsequent activation.

It localises to the lysosome membrane. Its subcellular location is the cell projection. The protein resides in the axon. The enzyme catalyses L-asparagine(in) + Na(+)(in) = L-asparagine(out) + Na(+)(out). The catalysed reaction is L-glutamine(in) + Na(+)(in) = L-glutamine(out) + Na(+)(out). Its function is as follows. Symporter that selectively cotransports sodium ions and amino acids, such as L-glutamine and L-asparagine from the lysosome into the cytoplasm and may participates in mTORC1 activation. The transport activity requires an acidic lysosomal lumen. The protein is Sodium-coupled neutral amino acid transporter 7 of Homo sapiens (Human).